An 817-amino-acid polypeptide reads, in one-letter code: V-type proton ATPase subunit a1 (817 aa).

Residues 1–422 (MEEFLDKLPQ…PAVYSVVTYP (422 aa)) lie on the Cytoplasmic side of the membrane. Residues 97 to 133 (DIALGDLERQLADHEHEVLEMNSNSEKLRQTYNELLE) adopt a coiled-coil conformation. A helical membrane pass occupies residues 423-443 (FLFAVMFGDWGHGLCLLLGAL). The Vacuolar portion of the chain corresponds to 444 to 468 (YLLARERKLSTQKLGSFMEMLFGGR). A helical membrane pass occupies residues 469–489 (YVILLMALFSIYCGLIYNEFF). Over 490 to 547 (SVPFHIFGGSAYKCRDTTCSDAYTVGLIKYRDPYPFGVDPSWRGSRTELPYLNSLKMK) the chain is Cytoplasmic. A helical membrane pass occupies residues 548 to 568 (MSILLGIAQMNLGLILSFFNA). The Vacuolar portion of the chain corresponds to 569–580 (RFFGSSLDIRYQ). A helical transmembrane segment spans residues 581–601 (FIPQMIFLNSLFGYLSLLIII). Over 602-639 (KWCTGSQADLYHVMIYMFLSPTEELGENELFWGQRPLQ) the chain is Cytoplasmic. The chain crosses the membrane as a helical span at residues 640–660 (IVLLLLAFIAVPWMLFPKPFA). Residues 661-758 (LRKIHMERFQ…VLLLAWGYEN (98 aa)) lie on the Vacuolar side of the membrane. A helical membrane pass occupies residues 759 to 779 (ILIRLIGVAVFAFATAFILLM). At 780–817 (METLSAFLHALRLHWVEFMGKFFNGDGYKFKPFSFALI) the chain is on the cytoplasmic side.

Belongs to the V-ATPase 116 kDa subunit family. As to quaternary structure, V-ATPase is a heteromultimeric enzyme composed of a peripheral catalytic V1 complex (components A to H) attached to an integral membrane V0 proton pore complex (components: a, c, c'', d and e).

It is found in the vacuole membrane. The protein resides in the golgi apparatus. It localises to the trans-Golgi network membrane. In terms of biological role, essential component of the vacuolar proton pump (V-ATPase), a multimeric enzyme that catalyzes the translocation of protons across the membranes. Required for assembly and activity of the V-ATPase. Required during cell expansion. This is V-type proton ATPase subunit a1 from Arabidopsis thaliana (Mouse-ear cress).